The chain runs to 677 residues: Testis-specific Y-encoded-like protein 2 (677 aa).

A disordered region spans residues 1–54; sequence MDRPDEGPPAKTPRLSSSEPRQRDLPPPPPPPLQRLPLPPPQQRPRPQEETEAA. Lys-11 is covalently cross-linked (Glycyl lysine isopeptide (Lys-Gly) (interchain with G-Cter in SUMO2)). Ser-18 carries the phosphoserine modification. The segment covering 25–44 has biased composition (pro residues); that stretch reads LPPPPPPPLQRLPLPPPQQR. Residues Lys-158 and Lys-160 each participate in a glycyl lysine isopeptide (Lys-Gly) (interchain with G-Cter in SUMO2) cross-link. The disordered stretch occupies residues 175–202; the sequence is KESVRRRQRRRRRRRKQRKAKESRERSA. Positions 178-193 are enriched in basic residues; the sequence is VRRRQRRRRRRRKQRK. Residue Thr-333 is modified to Phosphothreonine. Residues 469–658 form a disordered region; the sequence is ANENLCDSEN…EVNSEDSDIQ (190 aa). Positions 484–493 are enriched in polar residues; sequence GYNTKITDNK. Positions 509–525 are enriched in basic and acidic residues; sequence EKNTYDSEDSNSEKADG. Over residues 526–540 the composition is skewed to polar residues; that stretch reads DNTTLRDNQQVTNIQ. 2 stretches are compositionally biased toward acidic residues: residues 543-581 and 606-627; these read SDSD…DDDD and DYEE…ETSE. A compositionally biased stretch (basic and acidic residues) spans 639–650; the sequence is DERIYGEERSEV. Phosphoserine occurs at positions 648, 652, and 655.

The protein belongs to the nucleosome assembly protein (NAP) family. Interacts with histones. Interacts with CASK. Part of a complex containing CASK, TBR1 and TSPYL2. In terms of processing, phosphorylation at Thr-333 impairs function on cell proliferation. Present at high levels in the pituitary gland and at moderate levels in adrenal gland, brain, testis and ovary. In brain, expressed both in mature neurons and progenitor cells (at protein level).

It localises to the nucleus. The protein resides in the cytoplasm. Its function is as follows. Part of the CASK/TBR1/TSPYL2 transcriptional complex which modulates gene expression in response to neuronal synaptic activity, probably by facilitating nucleosome assembly. May inhibit cell proliferation by inducing p53-dependent CDKN1A expression. This chain is Testis-specific Y-encoded-like protein 2 (Tspyl2), found in Mus musculus (Mouse).